Here is a 117-residue protein sequence, read N- to C-terminus: MDWIWRILFLVGAATGAHSQMQLVQSGPEVKKPGTSVKVSCKASGFTFTSSAVQWVRQARGQRLEWIGWIVVGSGNTNYAQKFQERVTITRDMSTSTAYMELSSLRSEDTAVYYCAA.

A signal peptide spans 1 to 19 (MDWIWRILFLVGAATGAHS). The interval 20–44 (QMQLVQSGPEVKKPGTSVKVSCKAS) is framework-1. The Ig-like domain maps to 20–117 (QMQLVQSGPE…EDTAVYYCAA (98 aa)). Cysteines 41 and 115 form a disulfide. Residues 45–52 (GFTFTSSA) are complementarity-determining-1. The segment at 53–69 (VQWVRQARGQRLEWIGW) is framework-2. The interval 70-77 (IVVGSGNT) is complementarity-determining-2. A framework-3 region spans residues 78-115 (NYAQKFQERVTITRDMSTSTAYMELSSLRSEDTAVYYC). Residues 116–117 (AA) form a complementarity-determining-3 region.

In terms of assembly, immunoglobulins are composed of two identical heavy chains and two identical light chains; disulfide-linked.

The protein localises to the secreted. The protein resides in the cell membrane. Functionally, v region of the variable domain of immunoglobulin heavy chains that participates in the antigen recognition. Immunoglobulins, also known as antibodies, are membrane-bound or secreted glycoproteins produced by B lymphocytes. In the recognition phase of humoral immunity, the membrane-bound immunoglobulins serve as receptors which, upon binding of a specific antigen, trigger the clonal expansion and differentiation of B lymphocytes into immunoglobulins-secreting plasma cells. Secreted immunoglobulins mediate the effector phase of humoral immunity, which results in the elimination of bound antigens. The antigen binding site is formed by the variable domain of one heavy chain, together with that of its associated light chain. Thus, each immunoglobulin has two antigen binding sites with remarkable affinity for a particular antigen. The variable domains are assembled by a process called V-(D)-J rearrangement and can then be subjected to somatic hypermutations which, after exposure to antigen and selection, allow affinity maturation for a particular antigen. This chain is Immunoglobulin heavy variable 1-58, found in Homo sapiens (Human).